The primary structure comprises 926 residues: Alanine--tRNA ligase (926 aa).

Residues His615, His619, Cys719, and His723 each contribute to the Zn(2+) site. The segment at 887-910 is disordered; it reads RVGGGGGGPPDFAQGGGPDADALD. The segment covering 888-904 has biased composition (gly residues); sequence VGGGGGGPPDFAQGGGP.

It belongs to the class-II aminoacyl-tRNA synthetase family. The cofactor is Zn(2+).

The protein resides in the cytoplasm. The enzyme catalyses tRNA(Ala) + L-alanine + ATP = L-alanyl-tRNA(Ala) + AMP + diphosphate. Functionally, catalyzes the attachment of alanine to tRNA(Ala) in a two-step reaction: alanine is first activated by ATP to form Ala-AMP and then transferred to the acceptor end of tRNA(Ala). Also edits incorrectly charged Ser-tRNA(Ala) and Gly-tRNA(Ala) via its editing domain. The protein is Alanine--tRNA ligase of Halorubrum lacusprofundi (strain ATCC 49239 / DSM 5036 / JCM 8891 / ACAM 34).